Reading from the N-terminus, the 208-residue chain is Guanylate kinase (208 aa).

The Guanylate kinase-like domain maps to 4 to 184; that stretch reads GTLYIVSAPS…ALMDFKAIIR (181 aa). An ATP-binding site is contributed by 11 to 18; the sequence is APSGAGKS.

It belongs to the guanylate kinase family.

The protein localises to the cytoplasm. The enzyme catalyses GMP + ATP = GDP + ADP. In terms of biological role, essential for recycling GMP and indirectly, cGMP. The chain is Guanylate kinase from Photobacterium profundum (strain SS9).